The primary structure comprises 483 residues: MKTLNRRDFPGAQYPERIIQFGEGNFLRAFVDWQIDLLNEHTDLNSGVVVVRPIETSFPPSLSTQDGLYTTIIRGLNEKGEAVSDARLIRSVNREISVYSEYDEFLKLAHNPEMRFVFSNTTEAGISYHAGDKFDDAPAVSYPAKLTRLLFERFSHFNGALDKGWIIIPCELIDYNGDALRELVLRYAQEWALPEAFIQWLDQANSFCSTLVDRIVTGYPRDEVAKLEEELGYHDGFLDTAEHFYLFVIQGPKSLATELRLDKYPLNVLIVDDIKPYKERKVAILNGAHTALVPVAFQAGLDTVGEAMNDAEICAFVEKAIYEEIIPVLDLPRDELESFASAVTGRFRNPYIKHQLLSIALNGMTKFRTRILPQLLAGQKANGTLPARLTFALAALIAFYRGERNGETYPVQDDAHWLERYQQLWSQHRDRVIGTQELVAIVLAEKYHWEQDLTQVPGLVEQVANDLDAILEKGMREAVRPLC.

Residue 18–29 (IIQFGEGNFLRA) coordinates NAD(+).

The protein belongs to the mannitol dehydrogenase family. UxaB subfamily.

It catalyses the reaction D-altronate + NAD(+) = keto-D-tagaturonate + NADH + H(+). The protein operates within carbohydrate metabolism; pentose and glucuronate interconversion. The sequence is that of Altronate oxidoreductase from Shigella flexneri serotype 5b (strain 8401).